The chain runs to 233 residues: 2-C-methyl-D-erythritol 4-phosphate cytidylyltransferase (233 aa).

It belongs to the IspD/TarI cytidylyltransferase family. IspD subfamily.

It carries out the reaction 2-C-methyl-D-erythritol 4-phosphate + CTP + H(+) = 4-CDP-2-C-methyl-D-erythritol + diphosphate. It functions in the pathway isoprenoid biosynthesis; isopentenyl diphosphate biosynthesis via DXP pathway; isopentenyl diphosphate from 1-deoxy-D-xylulose 5-phosphate: step 2/6. Catalyzes the formation of 4-diphosphocytidyl-2-C-methyl-D-erythritol from CTP and 2-C-methyl-D-erythritol 4-phosphate (MEP). The chain is 2-C-methyl-D-erythritol 4-phosphate cytidylyltransferase from Syntrophotalea carbinolica (strain DSM 2380 / NBRC 103641 / GraBd1) (Pelobacter carbinolicus).